We begin with the raw amino-acid sequence, 697 residues long: Choline transporter-like protein 2 (697 aa).

Over 1-30 (MDMEEKPKYGEPRKFDPSFKGPIQNRGCTD) the chain is Cytoplasmic. The helical transmembrane segment at 31–51 (IVCCIIFIIAILGYLAVGILA) threads the bilayer. Residues 52–226 (WTHGDPRKVI…KIFEDYTKSW (175 aa)) are Extracellular-facing. Residues Asn-113 and Asn-204 are each glycosylated (N-linked (GlcNAc...) asparagine). The helical transmembrane segment at 227 to 247 (YWILICLLIAVVLSLIFIVLL) threads the bilayer. Residues 248 to 249 (RF) are Cytoplasmic-facing. The chain crosses the membrane as a helical span at residues 250 to 270 (LAGVMVWVMILMVVAVIAYGI). The Extracellular portion of the chain corresponds to 271–309 (AHCSIKYVSLKDTPGSNITLQQLGFQPDFAVYLHIRQTW). Asn-287 is a glycosylation site (N-linked (GlcNAc...) asparagine). The chain crosses the membrane as a helical span at residues 310–330 (LAFIIILAILELIIILLLIFL). The Cytoplasmic portion of the chain corresponds to 331–353 (RNRIRVAVELMKEASRAIGYVMS). A helical membrane pass occupies residues 354–374 (SLVFPIFTFFLLAIVIAFWGV). At 375–435 (NAVFLSTSSE…YGGETPYHKY (61 aa)) the chain is on the extracellular side. Residues Asn-391 and Asn-406 are each glycosylated (N-linked (GlcNAc...) asparagine). The chain crosses the membrane as a helical span at residues 436-456 (LILLQFYNVFLFFWCANFVTA). At 457–498 (LGQMTLAGAFASYYWAFDKSKDMPAFPLCASLGRSLRYHTGS) the chain is on the cytoplasmic side. The chain crosses the membrane as a helical span at residues 499-519 (LAFGSLLLAIVQVIRVLLEYI). Over 520–593 (DHKLKGAENK…RVVVLDKVTD (74 aa)) the chain is Extracellular. Residues 594–614 (FILFLGKLLIVGLVGIFAFFF) traverse the membrane as a helical segment. Residues 615-632 (FSGQTDAFKGTAPSLHYY) are Cytoplasmic-facing. The chain crosses the membrane as a helical span at residues 633-653 (WVPILTVLVCSYLIAHGFFSV). Topologically, residues 654–697 (YAMCVDTLFLCFLEDLERNDGSAERPYLMSENLLNVLKKKNQAN) are extracellular.

Belongs to the CTL (choline transporter-like) family.

The protein resides in the cell membrane. It localises to the mitochondrion outer membrane. It carries out the reaction choline(out) + n H(+)(in) = choline(in) + n H(+)(out). The enzyme catalyses ethanolamine(out) + n H(+)(in) = ethanolamine(in) + n H(+)(out). Its function is as follows. Choline/H+ antiporter, mainly in mitochodria. Also acts as a low-affinity ethanolamine/H+ antiporter, regulating the supply of extracellular ethanolamine (Etn) for the CDP-Etn pathway, redistribute intracellular Etn and balance the CDP-Cho and CDP-Etn arms of the Kennedy pathway. This is Choline transporter-like protein 2 (slc44a2) from Danio rerio (Zebrafish).